A 397-amino-acid chain; its full sequence is Putative serine/threonine-protein kinase R301 (397 aa).

Residues 25 to 397 (QIKSTSVGSG…IIRHFNSPRL (373 aa)) form the Protein kinase domain. Residues 31 to 39 (VGSGGSDNI) and Lys-53 contribute to the ATP site. The active-site Proton acceptor is Asp-218.

It belongs to the protein kinase superfamily. Ser/Thr protein kinase family.

The protein resides in the virion. The enzyme catalyses L-seryl-[protein] + ATP = O-phospho-L-seryl-[protein] + ADP + H(+). It carries out the reaction L-threonyl-[protein] + ATP = O-phospho-L-threonyl-[protein] + ADP + H(+). The sequence is that of Putative serine/threonine-protein kinase R301 from Acanthamoeba polyphaga (Amoeba).